A 124-amino-acid polypeptide reads, in one-letter code: Fluoride-specific ion channel FluC (124 aa).

Helical transmembrane passes span 4-24 (VLFV…ISLL), 35-55 (FGTL…FALG), 62-82 (PEFK…FSTF), and 95-115 (LVKA…VVYL). 2 residues coordinate Na(+): glycine 74 and threonine 77.

The protein belongs to the fluoride channel Fluc/FEX (TC 1.A.43) family.

Its subcellular location is the cell inner membrane. It catalyses the reaction fluoride(in) = fluoride(out). Its activity is regulated as follows. Na(+) is not transported, but it plays an essential structural role and its presence is essential for fluoride channel function. Functionally, fluoride-specific ion channel. Important for reducing fluoride concentration in the cell, thus reducing its toxicity. The polypeptide is Fluoride-specific ion channel FluC (Shewanella pealeana (strain ATCC 700345 / ANG-SQ1)).